Reading from the N-terminus, the 151-residue chain is uncharacterized protein (151 aa).

This is an uncharacterized protein from Acanthamoeba polyphaga mimivirus (APMV).